Reading from the N-terminus, the 439-residue chain is MKKLYLKTHGCQMNEYDSAKMADVLKFSHGLELTEDPAVADVFLLNTCSVREKAQTKVFSELGRWRPFKEKRPHVVIGVGGCVASQEGETILKQAPFVDIVFGPQTLHRLPDLLDSVIQKRKSVVDITFPEIEKFDRLPQPRAEGPSAFVSIMEGCSKYCTFCVVPYTRGEEISRPFDDVIAEVASLCEQGVREITLLGQNVNDYRGLMHDGQVADLALLIHYLAAMDNIERIRFTTSHPSAFSENLIDAYAEEPKLANHLHLPVQSGSDRILAAMKRNYTVLEYKSKIRKLRAVRPDISLSSDFIIGFPGETDADFEATMNLIHDMGFDHSFSFIYSPRPGTPAAQLPDDVPMAVKKERLAILQNRINAKAAEISQSMVGTQQRILVTGPSKKYPDQLSGRTENNRVVNFNGDTPLIGQMVTIKIKEARPYSLWGEIC.

Positions 2–119 (KKLYLKTHGC…LPDLLDSVIQ (118 aa)) constitute an MTTase N-terminal domain. Residues C11, C48, C82, C156, C160, and C163 each coordinate [4Fe-4S] cluster. The region spanning 142–374 (RAEGPSAFVS…QNRINAKAAE (233 aa)) is the Radical SAM core domain. One can recognise a TRAM domain in the interval 377–439 (QSMVGTQQRI…RPYSLWGEIC (63 aa)).

Belongs to the methylthiotransferase family. MiaB subfamily. In terms of assembly, monomer. The cofactor is [4Fe-4S] cluster.

The protein localises to the cytoplasm. The catalysed reaction is N(6)-dimethylallyladenosine(37) in tRNA + (sulfur carrier)-SH + AH2 + 2 S-adenosyl-L-methionine = 2-methylsulfanyl-N(6)-dimethylallyladenosine(37) in tRNA + (sulfur carrier)-H + 5'-deoxyadenosine + L-methionine + A + S-adenosyl-L-homocysteine + 2 H(+). Functionally, catalyzes the methylthiolation of N6-(dimethylallyl)adenosine (i(6)A), leading to the formation of 2-methylthio-N6-(dimethylallyl)adenosine (ms(2)i(6)A) at position 37 in tRNAs that read codons beginning with uridine. The sequence is that of tRNA-2-methylthio-N(6)-dimethylallyladenosine synthase from Coxiella burnetii (strain CbuK_Q154) (Coxiella burnetii (strain Q154)).